The primary structure comprises 181 residues: Acireductone dioxygenase (181 aa).

4 residues coordinate Fe(2+): H100, H102, E106, and H145. Ni(2+) contacts are provided by H100, H102, E106, and H145.

This sequence belongs to the acireductone dioxygenase (ARD) family. Monomer. It depends on Fe(2+) as a cofactor. Requires Ni(2+) as cofactor.

The enzyme catalyses 1,2-dihydroxy-5-(methylsulfanyl)pent-1-en-3-one + O2 = 3-(methylsulfanyl)propanoate + CO + formate + 2 H(+). It carries out the reaction 1,2-dihydroxy-5-(methylsulfanyl)pent-1-en-3-one + O2 = 4-methylsulfanyl-2-oxobutanoate + formate + 2 H(+). Its pathway is amino-acid biosynthesis; L-methionine biosynthesis via salvage pathway; L-methionine from S-methyl-5-thio-alpha-D-ribose 1-phosphate: step 5/6. In terms of biological role, catalyzes 2 different reactions between oxygen and the acireductone 1,2-dihydroxy-3-keto-5-methylthiopentene (DHK-MTPene) depending upon the metal bound in the active site. Fe-containing acireductone dioxygenase (Fe-ARD) produces formate and 2-keto-4-methylthiobutyrate (KMTB), the alpha-ketoacid precursor of methionine in the methionine recycle pathway. Ni-containing acireductone dioxygenase (Ni-ARD) produces methylthiopropionate, carbon monoxide and formate, and does not lie on the methionine recycle pathway. The polypeptide is Acireductone dioxygenase (Trichodesmium erythraeum (strain IMS101)).